Consider the following 232-residue polypeptide: MTAQKMTAQEIIAFIGNAVKKTTVKVTFEGELAGAVPAEVTKLGNVLFGDWKDVEPLLANLTENVDYVVEQDGRNSAVPLLDKRNINARIEPGAIIRDQVTIGDNAVIMMGAVINIGAEIGPGTMIDMGAILGGRATVGKNSHIGAGAVLAGVIEPASAEPVRVGDNVLVGANAVVIEGVQIGSGSVVAAGAIVTQDVPENVVVAGVPARIIKEIDAQTQQKTALEEALRTL.

The protein belongs to the transferase hexapeptide repeat family. DapH subfamily.

It carries out the reaction (S)-2,3,4,5-tetrahydrodipicolinate + acetyl-CoA + H2O = L-2-acetamido-6-oxoheptanedioate + CoA. It participates in amino-acid biosynthesis; L-lysine biosynthesis via DAP pathway; LL-2,6-diaminopimelate from (S)-tetrahydrodipicolinate (acetylase route): step 1/3. Catalyzes the transfer of an acetyl group from acetyl-CoA to tetrahydrodipicolinate. In Streptococcus suis (strain 98HAH33), this protein is 2,3,4,5-tetrahydropyridine-2,6-dicarboxylate N-acetyltransferase.